The sequence spans 95 residues: PqqA binding protein (95 aa).

It belongs to the PqqD family. In terms of assembly, monomer. Interacts with PqqE.

It participates in cofactor biosynthesis; pyrroloquinoline quinone biosynthesis. Functions as a PqqA binding protein and presents PqqA to PqqE, in the pyrroloquinoline quinone (PQQ) biosynthetic pathway. The sequence is that of PqqA binding protein from Rahnella aquatilis.